Consider the following 200-residue polypeptide: Recombination protein RecR (200 aa).

The segment at 58 to 73 (CQVCGNMDTENICGIC) adopts a C4-type zinc-finger fold. The 96-residue stretch at 81–176 (SVIAIVETVA…KISRLASGIP (96 aa)) folds into the Toprim domain.

The protein belongs to the RecR family.

In terms of biological role, may play a role in DNA repair. It seems to be involved in an RecBC-independent recombinational process of DNA repair. It may act with RecF and RecO. The polypeptide is Recombination protein RecR (Rickettsia bellii (strain OSU 85-389)).